A 305-amino-acid polypeptide reads, in one-letter code: Diacylglycerol kinase (305 aa).

In terms of domain architecture, DAGKc spans methionine 1–tyrosine 132. Residues asparagine 10–glycine 14, threonine 41, glycine 67–glutamate 73, and threonine 94 each bind ATP. Positions 213, 216, and 218 each coordinate Mg(2+). The active-site Proton acceptor is the glutamate 273.

It belongs to the diacylglycerol/lipid kinase family. Homodimer. The cofactor is Mg(2+).

The catalysed reaction is a 1,2-diacyl-sn-glycerol + ATP = a 1,2-diacyl-sn-glycero-3-phosphate + ADP + H(+). In terms of biological role, catalyzes the phosphorylation of diacylglycerol (DAG) into phosphatidic acid. Is a key enzyme involved in the production of lipoteichoic acid by reintroducing DAG formed from the breakdown of membrane phospholipids into the phosphatidylglycerol biosynthetic pathway. This Staphylococcus saprophyticus subsp. saprophyticus (strain ATCC 15305 / DSM 20229 / NCIMB 8711 / NCTC 7292 / S-41) protein is Diacylglycerol kinase (dagK).